The chain runs to 273 residues: Undecaprenyl-diphosphatase (273 aa).

Transmembrane regions (helical) follow at residues 13–35, 45–62, 82–102, 108–128, 186–206, 219–239, and 250–270; these read GLVE…VFGN, VFEI…VFEY, FVLN…LFGK, LFNP…ILWV, TEFS…YDVL, LILI…KALL, and FAYY…SGWI.

The protein belongs to the UppP family.

It localises to the cell inner membrane. The catalysed reaction is di-trans,octa-cis-undecaprenyl diphosphate + H2O = di-trans,octa-cis-undecaprenyl phosphate + phosphate + H(+). Its function is as follows. Catalyzes the dephosphorylation of undecaprenyl diphosphate (UPP). Confers resistance to bacitracin. The polypeptide is Undecaprenyl-diphosphatase (Neisseria meningitidis serogroup A / serotype 4A (strain DSM 15465 / Z2491)).